Here is a 306-residue protein sequence, read N- to C-terminus: GTP cyclohydrolase FolE2 (306 aa).

The protein belongs to the GTP cyclohydrolase IV family.

The enzyme catalyses GTP + H2O = 7,8-dihydroneopterin 3'-triphosphate + formate + H(+). It functions in the pathway cofactor biosynthesis; 7,8-dihydroneopterin triphosphate biosynthesis; 7,8-dihydroneopterin triphosphate from GTP: step 1/1. Functionally, converts GTP to 7,8-dihydroneopterin triphosphate. The sequence is that of GTP cyclohydrolase FolE2 from Xanthomonas oryzae pv. oryzae (strain MAFF 311018).